Reading from the N-terminus, the 290-residue chain is MDPEVSLLLQCPPGGLPEKQVRAELSPAYDRRPLPGGDKAIIAIWESRLQAQPWLFNAPKFRLHSATLAPTGLPGPQLLLRLGLTSYQDFLGTNWASSAAWLRQQGATDWGDKQAYLADPLGVGAALATADDFLVFLRRSGQVAEAPGLVDVPGGHPEPQALCPGDSPLHKDLPGELVVHELFSSVLQEICDEVNVPPLTLSQPLLLGIACNETSAGRASAEFYVQCSLTSEQVRRHYMSGGPEAHESTGIIFVEKQSMQRLQETEMWPELCPSAKGAIFLYNRVQGSST.

Residues Phe56, Tyr87, Arg139, Ala144, Asp151, His156, and Glu158 each coordinate substrate. Positions 118 to 285 constitute a Nudix hydrolase domain; it reads ADPLGVGAAL…KGAIFLYNRV (168 aa). Residues 175-196 carry the Nudix box motif; the sequence is GELVVHELFSSVLQEICDEVNV. Residues Glu189 and Glu193 each contribute to the Mg(2+) site. Ser274 contacts substrate.

This sequence belongs to the Nudix family. Mg(2+) serves as cofactor.

It catalyses the reaction UDP-sugar + H2O = UMP + alpha-D-aldose 1-phosphate.. Functionally, hydrolyzes UDP-glucose to glucose 1-phosphate and UMP and UDP-galactose to galactose 1-phosphate and UMP. Preferred substrate is UDP-glucose. The polypeptide is Uridine diphosphate glucose pyrophosphatase NUDT22 (NUDT22) (Bos taurus (Bovine)).